The sequence spans 45 residues: Large ribosomal subunit protein bL34 (45 aa).

This sequence belongs to the bacterial ribosomal protein bL34 family.

In Leifsonia xyli subsp. xyli (strain CTCB07), this protein is Large ribosomal subunit protein bL34.